Reading from the N-terminus, the 210-residue chain is uncharacterized protein (210 aa).

Residues 4-180 (RKVYLYVFHT…AVEVLKKLDV (177 aa)) form the PfpI endopeptidase domain. C110 functions as the Nucleophile in the catalytic mechanism.

Belongs to the peptidase C56 family.

This is an uncharacterized protein from Bacillus subtilis (strain 168).